We begin with the raw amino-acid sequence, 521 residues long: Probable cytosol aminopeptidase (521 aa).

2 residues coordinate Mn(2+): Lys-268 and Asp-273. The active site involves Lys-280. Positions 291, 350, and 352 each coordinate Mn(2+). Arg-354 is a catalytic residue.

This sequence belongs to the peptidase M17 family. Mn(2+) is required as a cofactor.

Its subcellular location is the cytoplasm. It catalyses the reaction Release of an N-terminal amino acid, Xaa-|-Yaa-, in which Xaa is preferably Leu, but may be other amino acids including Pro although not Arg or Lys, and Yaa may be Pro. Amino acid amides and methyl esters are also readily hydrolyzed, but rates on arylamides are exceedingly low.. The catalysed reaction is Release of an N-terminal amino acid, preferentially leucine, but not glutamic or aspartic acids.. Presumably involved in the processing and regular turnover of intracellular proteins. Catalyzes the removal of unsubstituted N-terminal amino acids from various peptides. This is Probable cytosol aminopeptidase from Chromobacterium violaceum (strain ATCC 12472 / DSM 30191 / JCM 1249 / CCUG 213 / NBRC 12614 / NCIMB 9131 / NCTC 9757 / MK).